We begin with the raw amino-acid sequence, 76 residues long: RNA-binding protein KhpA (76 aa).

The KH domain occupies 29-76 (SLTYKLSVSKEDMGRVIGKQGRIAKAIRTLVYAVGSKNDKKIRLEIIE).

This sequence belongs to the KhpA RNA-binding protein family. In terms of assembly, forms a complex with KhpB.

The protein localises to the cytoplasm. In terms of biological role, a probable RNA chaperone. Forms a complex with KhpB which binds to cellular RNA and controls its expression. Plays a role in peptidoglycan (PG) homeostasis and cell length regulation. The sequence is that of RNA-binding protein KhpA from Listeria innocua serovar 6a (strain ATCC BAA-680 / CLIP 11262).